We begin with the raw amino-acid sequence, 117 residues long: Large ribosomal subunit protein uL18 (117 aa).

This sequence belongs to the universal ribosomal protein uL18 family. Part of the 50S ribosomal subunit; part of the 5S rRNA/L5/L18/L25 subcomplex. Contacts the 5S and 23S rRNAs.

Functionally, this is one of the proteins that bind and probably mediate the attachment of the 5S RNA into the large ribosomal subunit, where it forms part of the central protuberance. The chain is Large ribosomal subunit protein uL18 from Neisseria gonorrhoeae (strain ATCC 700825 / FA 1090).